A 334-amino-acid chain; its full sequence is N-acetyl-gamma-glutamyl-phosphate reductase (334 aa).

The active site involves Cys154.

It belongs to the NAGSA dehydrogenase family. Type 1 subfamily.

Its subcellular location is the cytoplasm. It carries out the reaction N-acetyl-L-glutamate 5-semialdehyde + phosphate + NADP(+) = N-acetyl-L-glutamyl 5-phosphate + NADPH + H(+). It participates in amino-acid biosynthesis; L-arginine biosynthesis; N(2)-acetyl-L-ornithine from L-glutamate: step 3/4. Functionally, catalyzes the NADPH-dependent reduction of N-acetyl-5-glutamyl phosphate to yield N-acetyl-L-glutamate 5-semialdehyde. This Aliivibrio fischeri (strain ATCC 700601 / ES114) (Vibrio fischeri) protein is N-acetyl-gamma-glutamyl-phosphate reductase.